The chain runs to 227 residues: Venom allergen 5.01 (227 aa).

Positions 1 to 23 (MEIGGLVYLILIITIINLSFGET) are cleaved as a signal peptide. Intrachain disulfides connect C27–C39, C31–C124, C49–C117, and C193–C210. In terms of domain architecture, SCP spans 68 to 212 (LKRHNDFRQN…WYTHYLVCNY (145 aa)).

It belongs to the CRISP family. Venom allergen 5-like subfamily. In terms of tissue distribution, expressed by the venom gland.

It localises to the secreted. This Dolichovespula maculata (Bald-faced hornet) protein is Venom allergen 5.01.